Reading from the N-terminus, the 436-residue chain is MSQALPLVTRQGDRIAIVSGLRTPFARQATAYHGVPAVDLGKMVVGELLARSEIPPEVIEQLVFGQVVQMPEAPNIAREIVLGTGMSVHTDAYSVSRACATSFQAVANVAESLMAGTIRAGIAGGADSSSVLPIGVSKKLARTLVDANKARTAGQRLKLFSRLRLRDLLPVPPAVAEYSTGLRMGDTAEQMAKTHGITREQQDALAHRSHQLAAQAWAEGKLREEVMTAYTPPYREPLSEDNNIRKTSSLADYAKLRPAFDRKHGTVTAANSTPLTDGAAAVILMTESRARELGLTPLGYLRSYAFTAVDVWQDMLLGPAWSTPLALERAGLTMADLTLIDMHEAFASQTLTNLKLMASDRFAREVLGRSQATGEVDESKFNVLGGSIAYGHPFAATGARMITQTLNELRRRGGGFGLVTACAAGGLGAAMVLEAE.

C99 (acyl-thioester intermediate) is an active-site residue. Residues H392 and C422 each act as proton acceptor in the active site.

It belongs to the thiolase-like superfamily. Thiolase family. As to quaternary structure, heterotetramer of two alpha chains (FadJ) and two beta chains (FadI).

The protein localises to the cytoplasm. The enzyme catalyses an acyl-CoA + acetyl-CoA = a 3-oxoacyl-CoA + CoA. It participates in lipid metabolism; fatty acid beta-oxidation. In terms of biological role, catalyzes the final step of fatty acid oxidation in which acetyl-CoA is released and the CoA ester of a fatty acid two carbons shorter is formed. The protein is 3-ketoacyl-CoA thiolase of Cronobacter sakazakii (strain ATCC BAA-894) (Enterobacter sakazakii).